The chain runs to 159 residues: Small ribosomal subunit protein uS19 (159 aa).

Belongs to the universal ribosomal protein uS19 family.

Its function is as follows. Protein S19 forms a complex with S13 that binds strongly to the 16S ribosomal RNA. This is Small ribosomal subunit protein uS19 from Pyrobaculum arsenaticum (strain DSM 13514 / JCM 11321 / PZ6).